Consider the following 331-residue polypeptide: 6-phosphogluconolactonase (331 aa).

Lys-287 carries the N6-acetyllysine modification.

This sequence belongs to the cycloisomerase 2 family.

The enzyme catalyses 6-phospho-D-glucono-1,5-lactone + H2O = 6-phospho-D-gluconate + H(+). It functions in the pathway carbohydrate degradation; pentose phosphate pathway; D-ribulose 5-phosphate from D-glucose 6-phosphate (oxidative stage): step 2/3. Functionally, catalyzes the hydrolysis of 6-phosphogluconolactone to 6-phosphogluconate. The sequence is that of 6-phosphogluconolactonase from Escherichia coli O157:H7.